The primary structure comprises 221 residues: Protein-L-isoaspartate O-methyltransferase (221 aa).

The active site involves S64.

It belongs to the methyltransferase superfamily. L-isoaspartyl/D-aspartyl protein methyltransferase family.

Its subcellular location is the cytoplasm. The catalysed reaction is [protein]-L-isoaspartate + S-adenosyl-L-methionine = [protein]-L-isoaspartate alpha-methyl ester + S-adenosyl-L-homocysteine. Catalyzes the methyl esterification of L-isoaspartyl residues in peptides and proteins that result from spontaneous decomposition of normal L-aspartyl and L-asparaginyl residues. It plays a role in the repair and/or degradation of damaged proteins. The chain is Protein-L-isoaspartate O-methyltransferase from Cytophaga hutchinsonii (strain ATCC 33406 / DSM 1761 / CIP 103989 / NBRC 15051 / NCIMB 9469 / D465).